Reading from the N-terminus, the 67-residue chain is Large ribosomal subunit protein bL35 (67 aa).

This sequence belongs to the bacterial ribosomal protein bL35 family.

This is Large ribosomal subunit protein bL35 from Leptothrix cholodnii (strain ATCC 51168 / LMG 8142 / SP-6) (Leptothrix discophora (strain SP-6)).